We begin with the raw amino-acid sequence, 135 residues long: MKAGVAPNGRPYQVLIAENSRFQAKQLAQILESEGYQVIGFAENGKELVKLYDEHRLVDLITLDLNLPVMDGYATFFEIKGKGVLPRIVIVSEENTPAVLKNLIDEGAMDYIPKPIKREKILEKVNAAIKKVPKV.

A Response regulatory domain is found at 13–129 (QVLIAENSRF…KILEKVNAAI (117 aa)). Residue Asp-64 is modified to 4-aspartylphosphate.

This is an uncharacterized protein from Leptospira interrogans serogroup Icterohaemorrhagiae serovar copenhageni (strain Fiocruz L1-130).